A 151-amino-acid polypeptide reads, in one-letter code: Large ribosomal subunit protein uL13 (151 aa).

A disordered region spans residues 126–151 (YPGPNHPHQAQKPEELTLNTIPNGDK). A compositionally biased stretch (polar residues) spans 142–151 (TLNTIPNGDK).

It belongs to the universal ribosomal protein uL13 family. In terms of assembly, part of the 50S ribosomal subunit.

Functionally, this protein is one of the early assembly proteins of the 50S ribosomal subunit, although it is not seen to bind rRNA by itself. It is important during the early stages of 50S assembly. The protein is Large ribosomal subunit protein uL13 of Crocosphaera subtropica (strain ATCC 51142 / BH68) (Cyanothece sp. (strain ATCC 51142)).